The following is a 609-amino-acid chain: Glutamine--fructose-6-phosphate aminotransferase [isomerizing] (609 aa).

Cys-2 acts as the Nucleophile; for GATase activity in catalysis. Residues 2–218 (CGIVGAIAQR…EGDIAEITRR (217 aa)) form the Glutamine amidotransferase type-2 domain. SIS domains are found at residues 286-426 (ADDL…LKGL) and 458-599 (LAED…VDQP). Lys-604 functions as the For Fru-6P isomerization activity in the catalytic mechanism.

Homodimer.

Its subcellular location is the cytoplasm. The catalysed reaction is D-fructose 6-phosphate + L-glutamine = D-glucosamine 6-phosphate + L-glutamate. Functionally, catalyzes the first step in hexosamine metabolism, converting fructose-6P into glucosamine-6P using glutamine as a nitrogen source. The polypeptide is Glutamine--fructose-6-phosphate aminotransferase [isomerizing] (Salmonella typhi).